The chain runs to 740 residues: Dynein regulatory complex protein 1 (740 aa).

Residues Ile-101–Arg-388 adopt a coiled-coil conformation. The interval Ala-570 to Pro-617 is disordered. Basic and acidic residues predominate over residues Ala-575–Leu-586. Residues Glu-587–Lys-598 are compositionally biased toward acidic residues. Residues Leu-691 to Asn-724 adopt a coiled-coil conformation.

The protein belongs to the DRC1 family. In terms of assembly, component of the nexin-dynein regulatory complex (N-DRC). Interacts with CCDC65/DRC2, DRC3, GAS8/DRC4 and TCTE1/DRC5.

It is found in the cytoplasm. Its subcellular location is the cytoskeleton. The protein resides in the cilium axoneme. It localises to the flagellum axoneme. Its function is as follows. Component of the nexin-dynein regulatory complex (N-DRC) a key regulator of ciliary/flagellar motility which maintains the alignment and integrity of the distal axoneme and regulates microtubule sliding in motile axonemes. Plays a critical role in the assembly of N-DRC and also stabilizes the assembly of multiple inner dynein arms and radial spokes. Coassembles with CCDC65/DRC2 to form a central scaffold needed for assembly of the N-DRC and its attachment to the outer doublet microtubules. In Homo sapiens (Human), this protein is Dynein regulatory complex protein 1 (DRC1).